The following is a 260-amino-acid chain: Small ribosomal subunit protein uS2 (260 aa).

The tract at residues 224-260 is disordered; sequence GRQGQDAGEDSAEKTFADTADGEGDFEESSNNENQEA. Residues 243–260 are compositionally biased toward acidic residues; sequence ADGEGDFEESSNNENQEA.

Belongs to the universal ribosomal protein uS2 family.

This chain is Small ribosomal subunit protein uS2, found in Oenococcus oeni (strain ATCC BAA-331 / PSU-1).